A 194-amino-acid chain; its full sequence is Probable transcription factor At4g00130 (194 aa).

It belongs to the GeBP family.

In Arabidopsis thaliana (Mouse-ear cress), this protein is Probable transcription factor At4g00130.